Consider the following 267-residue polypeptide: Ribosomal RNA small subunit methyltransferase A (267 aa).

6 residues coordinate S-adenosyl-L-methionine: Asn12, Ile14, Gly39, Glu60, Asp84, and Asn110.

The protein belongs to the class I-like SAM-binding methyltransferase superfamily. rRNA adenine N(6)-methyltransferase family. RsmA subfamily.

It is found in the cytoplasm. It catalyses the reaction adenosine(1518)/adenosine(1519) in 16S rRNA + 4 S-adenosyl-L-methionine = N(6)-dimethyladenosine(1518)/N(6)-dimethyladenosine(1519) in 16S rRNA + 4 S-adenosyl-L-homocysteine + 4 H(+). Specifically dimethylates two adjacent adenosines (A1518 and A1519) in the loop of a conserved hairpin near the 3'-end of 16S rRNA in the 30S particle. May play a critical role in biogenesis of 30S subunits. The sequence is that of Ribosomal RNA small subunit methyltransferase A from Mesoplasma florum (strain ATCC 33453 / NBRC 100688 / NCTC 11704 / L1) (Acholeplasma florum).